A 250-amino-acid chain; its full sequence is tRNA (guanine-N(1)-)-methyltransferase (250 aa).

Residues Gly-116 and 136-141 (IGDYVL) each bind S-adenosyl-L-methionine.

Belongs to the RNA methyltransferase TrmD family. Homodimer.

Its subcellular location is the cytoplasm. The catalysed reaction is guanosine(37) in tRNA + S-adenosyl-L-methionine = N(1)-methylguanosine(37) in tRNA + S-adenosyl-L-homocysteine + H(+). Specifically methylates guanosine-37 in various tRNAs. This is tRNA (guanine-N(1)-)-methyltransferase from Pseudomonas putida (strain GB-1).